Reading from the N-terminus, the 106-residue chain is Putative double-stranded DNA mimic protein PM0536 (106 aa).

This sequence belongs to the putative dsDNA mimic protein family.

May act as a double-stranded DNA (dsDNA) mimic. Probably regulates the activity of a dsDNA-binding protein. The protein is Putative double-stranded DNA mimic protein PM0536 of Pasteurella multocida (strain Pm70).